The chain runs to 233 residues: Type IV secretion system protein PtlE homolog (233 aa).

A helical transmembrane segment spans residues 42-62 (VAWAALAVTALSLIAIATMLP).

This sequence belongs to the virB8 family.

It is found in the cell inner membrane. The sequence is that of Type IV secretion system protein PtlE homolog (ptlE) from Bordetella bronchiseptica (strain ATCC BAA-588 / NCTC 13252 / RB50) (Alcaligenes bronchisepticus).